The following is a 273-amino-acid chain: L-cysteine S-thiosulfotransferase subunit SoxA (273 aa).

The N-terminal stretch at 1–24 (MKKTVTAVALLCALSSTAIAPTFA) is a signal peptide. A disulfide bridge connects residues Cys-74 and Cys-110. Positions 162 to 273 (EMYELGKRMF…GVMLTPGIKR (112 aa)) constitute a Cytochrome c domain. Residues Cys-182 and His-186 each coordinate heme. Arg-230 is a substrate binding site. Cys-234 contacts heme. The active-site Cysteine persulfide intermediate is Cys-234.

This sequence belongs to the SoxA family. Heterodimer of SoxA and SoxX. It depends on heme as a cofactor. Post-translationally, cysteine persulfide at Cys-234.

The protein localises to the periplasm. The catalysed reaction is L-cysteinyl-[SoxY protein] + thiosulfate + 2 Fe(III)-[cytochrome c] = S-sulfosulfanyl-L-cysteinyl-[SoxY protein] + 2 Fe(II)-[cytochrome c] + 2 H(+). It catalyses the reaction S-sulfanyl-L-cysteinyl-[SoxY protein] + thiosulfate + 2 Fe(III)-[cytochrome c] = S-(2-sulfodisulfanyl)-L-cysteinyl-[SoxY protein] + 2 Fe(II)-[cytochrome c] + 2 H(+). C-type monoheme cytochrome, which is part of the SoxAX cytochrome complex involved in sulfur oxidation. The SoxAX complex catalyzes the formation of a heterodisulfide bond between the conserved cysteine residue on a sulfur carrier SoxYZ complex subunit SoxY and thiosulfate or other inorganic sulfur substrates. This leads to the liberation of two electrons, which may be transferred from the SoxAX complex to another cytochrome c that then channels them into the respiratory electron transport chain. Some electrons may be used for reductive CO(2) fixation. In Hydrogenophilus thermoluteolus (Pseudomonas hydrogenothermophila), this protein is L-cysteine S-thiosulfotransferase subunit SoxA.